The following is a 431-amino-acid chain: Guanine nucleotide exchange factor rei-2 (431 aa).

A compositionally biased stretch (polar residues) spans 1-21 (MDETATSSEVTETFVSDPTTR). Residues 1–28 (MDETATSSEVTETFVSDPTTRQFEEDGH) form a disordered region. Coiled-coil stretches lie at residues 149 to 171 (EVLN…AESL) and 214 to 247 (LEAQ…RISE). Positions 249–298 (IHEERSTGSLESAVSSDQEDQKSDFKSSESLPGNPPPYAPTAPPPYEDKY) are disordered. The span at 255–264 (TGSLESAVSS) shows a compositional bias: polar residues. Positions 281 to 293 (GNPPPYAPTAPPP) are enriched in pro residues.

The protein belongs to the SH3BP5 family. In terms of assembly, interacts with rab-11.1. Binds preferentially to the GDP-bound form of rab-11.1.

Its function is as follows. Guanine nucleotide exchange factor for Rab GTPase Rab-11.1. May spatially and temporally regulate the distribution of Rab-11.1 to target membranes during embryogenesis. May play a role in cytokinesis, probably by targeting rab-11.1 to the cleavage furrows. The protein is Guanine nucleotide exchange factor rei-2 of Caenorhabditis elegans.